A 180-amino-acid chain; its full sequence is Cytokinin-beta-glucosidase 1 (180 aa).

In terms of biological role, hydrolyzes cytokinin glucosides thus liberating free cytokinins. This chain is Cytokinin-beta-glucosidase 1 (ROLC1), found in Linaria vulgaris (Toadflax).